A 431-amino-acid chain; its full sequence is MTNLLWQKPGVAVDAKIQTFLAGDDVILDREFFLYDIAASKAHAQGLQHIGILSLEELGGLSEQLDLLADDFRSGAFVLDAHYEDCHSAIEARLTECLGDAGRKIHTGRSRNDQILVATRLWLKDKLQRVAALSTEVAKVALDRAQAEAELPVPGYTHIQRAVVSSAGMWWAGWAEAFIDNAVRANDTFKLVDTNPLGTAAGYGVNLPLDRAHTTAELGFARLQVSPIYAQLSRGKFELAALEALGGATLDLRRIAWDLSLFTSGEFAFVALPAQYTTGSSIMPNKRNPDVIELMRATHASVAAARTEIEQLLSLPSGYHRDLQSSKGAIVHGFARGLAALELLPALLANLEWRPDKLRSAIDSGMYATDVAVEAAVAGVPFRDAYKAAAAASDSAGQGRTPEGSLAARVSPGAAADLQLDVLRARWEALQ.

This sequence belongs to the lyase 1 family. Argininosuccinate lyase subfamily.

It localises to the cytoplasm. It catalyses the reaction 2-(N(omega)-L-arginino)succinate = fumarate + L-arginine. The protein operates within amino-acid biosynthesis; L-arginine biosynthesis; L-arginine from L-ornithine and carbamoyl phosphate: step 3/3. In Xanthomonas campestris pv. campestris (strain ATCC 33913 / DSM 3586 / NCPPB 528 / LMG 568 / P 25), this protein is Argininosuccinate lyase.